Here is a 305-residue protein sequence, read N- to C-terminus: MVMGFVNVLKPPGLTSHDVVQNLRRLLKVKRIGHGGTLDPLAAGVLPVAVGTATRLLEYLQGGDKAYRAEFILGLKTDTQDLGGRVLARKPCPPFTEKDLQAATRPFTGTIRQVPPMVSAVHYQGRRLYELAREGLEVERPARQVTIHEFRLIRAWPDGPYYRALIDITCSRGTYIRTLGADWGDYLGVGATLAFLLRTRAGSFRLTDAWTLEEIAGAIDRGERTFLLPPAAGLAHLPVIIVPGEFIRHVSNGVAIKGDVCRPLPSLREGDIVRLETGEGQLLALARVEPDTRGSFLLKPHKVLK.

Catalysis depends on D39, which acts as the Nucleophile. Positions 237–305 constitute a PUA domain; it reads LPVIIVPGEF…FLLKPHKVLK (69 aa).

This sequence belongs to the pseudouridine synthase TruB family. Type 1 subfamily.

The catalysed reaction is uridine(55) in tRNA = pseudouridine(55) in tRNA. Responsible for synthesis of pseudouridine from uracil-55 in the psi GC loop of transfer RNAs. In Moorella thermoacetica (strain ATCC 39073 / JCM 9320), this protein is tRNA pseudouridine synthase B.